The chain runs to 715 residues: Protein DOA1 (715 aa).

WD repeat units follow at residues 11–40 (GHDQ…RLWS), 53–82 (GQGF…NGVP), 97–125 (GHQG…KVWK), 135–166 (AHNA…KLWQ), 177–206 (IHND…KLVD), 218–247 (GHES…RIWS), and 259–288 (LPAI…RIFS). At S332 the chain carries Phosphoserine. A PFU domain is found at 352-449 (AHQFSNSSWK…NGISLDQPND (98 aa)). Residues 434-440 (FILKNTN) form an interaction with HSE1 region. The 251-residue stretch at 465 to 715 (KVLPVKQYLI…RFKDIFDDLS (251 aa)) folds into the PUL domain. 6 ARM repeats span residues 478-512 (YNPD…LHDI), 513-543 (DESW…VRLI), 544-582 (VKKL…CFNN), 583-635 (ENWG…LVTK), 636-680 (GNSD…LATV), and 681-715 (EPTL…DDLS).

Belongs to the WD repeat PLAP family. In terms of assembly, forms a complex composed of CDC48, NPL4, UFD1, DOA1, SHP1 and deubiquitinase OTU1; within the complex interacts with CDC48. Interacts (via PUL domain) with CDC48 (via C-terminus); the interaction is direct. Forms a complex composed of CDC48, DOA1, deubiquitinase UBP3 and probably BRE5; within the complex interacts with CDC48 and UBP3. May form a complex composed of VPS27, HSE1 and DOA1. Interacts with HSE1 (via SH3 domain). Interacts (via WD repeats and PFU domain) with ubiquitin; the interaction is direct. Interacts with ubiquitinated FZO1 but not unmodified FZO1; the interaction recruits FZO1 to CDC48 and promotes FZO1 proteasomal degradation.

The protein resides in the nucleus. Its subcellular location is the cytoplasm. The protein localises to the mitochondrion outer membrane. It localises to the endosome membrane. Ubiquitin-binding protein involved in protein ubiquitination, sorting and degradation. Acts as a ubiquitinated substrate-recruiting adapter for chaperone ATPase CDC48 by binding mono- or polyubiquitin chains. Depending on the context, promotes or prevents proteasomal degradation of ubiquitinated proteins. Involved in the ubiquitin fusion degradation (UFD) pathway by promoting the degradation of ubiquitinated proteins. Involved in the mitochondria-associated degradation pathway (MAD) by promoting the degradation of several ubiquitinated membrane proteins. By competing with UFD2 to bind CDC48, prevents the multi-ubiquitination and subsequent degradation of UFD2-dependent substrates. Required for ribophagy, a process which relocalizes ribosomal particles into the vacuole for degradation in response to starvation. Involved in the ubiquitin-mediated sorting of membrane proteins into multivesicular bodies (MVBs). In addition, plays an essential role in maintaining cellular ubiquitin levels. May affect indirectly the degradation of ubiquitinylated proteins by regulating cellular ubiquitin levels. The chain is Protein DOA1 from Saccharomyces cerevisiae (strain ATCC 204508 / S288c) (Baker's yeast).